Consider the following 428-residue polypeptide: Enolase (428 aa).

Q164 provides a ligand contact to (2R)-2-phosphoglycerate. E208 functions as the Proton donor in the catalytic mechanism. Mg(2+) is bound by residues D245, E286, and D313. K338, R367, S368, and K389 together coordinate (2R)-2-phosphoglycerate. K338 (proton acceptor) is an active-site residue.

It belongs to the enolase family. Mg(2+) is required as a cofactor.

The protein localises to the cytoplasm. Its subcellular location is the secreted. The protein resides in the cell surface. It carries out the reaction (2R)-2-phosphoglycerate = phosphoenolpyruvate + H2O. It participates in carbohydrate degradation; glycolysis; pyruvate from D-glyceraldehyde 3-phosphate: step 4/5. Its function is as follows. Catalyzes the reversible conversion of 2-phosphoglycerate (2-PG) into phosphoenolpyruvate (PEP). It is essential for the degradation of carbohydrates via glycolysis. This is Enolase from Pyrococcus horikoshii (strain ATCC 700860 / DSM 12428 / JCM 9974 / NBRC 100139 / OT-3).